Reading from the N-terminus, the 236-residue chain is V-set and transmembrane domain-containing protein 1 (236 aa).

Positions 1–16 (MTAEFLSLLCLGLCLG) are cleaved as a signal peptide. At 17-135 (YEDEKKNEKP…APSMKTDTRT (119 aa)) the chain is on the extracellular side. The Ig-like V-type domain occupies 27-114 (PKPSLHAWPS…EWSESSEHLQ (88 aa)). Asn-44 and Asn-55 each carry an N-linked (GlcNAc...) asparagine glycan. Cys-49 and Cys-96 form a disulfide bridge. A helical membrane pass occupies residues 136 to 156 (IFVAIFSCISILLLFLSVFII). Residues 157-236 (YRCSQHSSSS…GSHEYAALKV (80 aa)) are Cytoplasmic-facing. A disordered region spans residues 166-200 (SEESTKRTSHSKLPEQEAAEADLSNMERVSLSTAD). 2 consecutive short sequence motifs (ITIM motif) follow at residues 204–209 (VTYAEL) and 229–234 (HEYAAL). The interval 215-236 (SEAASDTTQEPPGSHEYAALKV) is disordered.

Post-translationally, isoform 2 is N-glycosylated. As to expression, expressed on myeloid (neutrophils, eosinophils and monocytes) but not on lymphoid cells.

The protein localises to the membrane. The protein resides in the secreted. Its function is as follows. Behaves as a cytokine, promoting IL17A secretion by CD4+ T-cells, and differentiation and activation of IL17 producing helper T-cells (TH17). Functionally, inhibitory immune receptor involved in the regulation of phagocytes. This chain is V-set and transmembrane domain-containing protein 1 (VSTM1), found in Homo sapiens (Human).